The chain runs to 68 residues: MIGILLLIGICVAVTVAILYAMYNKIKNSQNPSPNVNLPPPETRNTRFVNNLEKDHISSLYNLVKSSV.

The helical transmembrane segment at 1–21 threads the bilayer; it reads MIGILLLIGICVAVTVAILYA. Residues 22–68 are Virion surface-facing; that stretch reads MYNKIKNSQNPSPNVNLPPPETRNTRFVNNLEKDHISSLYNLVKSSV.

It belongs to the orthopoxvirus OPG139 family. Phosphorylated by a OPG054-independent mechanism.

The protein localises to the virion membrane. In terms of biological role, essential for the encapsidation of DNA into immature virions (IV) and the subsequent maturation of IV into mature virions (MV). The sequence is that of Virion membrane protein OPG139 (OPG139) from Homo sapiens (Human).